A 489-amino-acid polypeptide reads, in one-letter code: Protein MGF 505-2R (489 aa).

This sequence belongs to the asfivirus MGF 505 family.

In terms of biological role, plays a role in virus cell tropism, and may be required for efficient virus replication in macrophages. This chain is Protein MGF 505-2R, found in Ornithodoros (relapsing fever ticks).